The sequence spans 291 residues: Pirin (291 aa).

Histidine 56, histidine 58, histidine 101, and glutamate 103 together coordinate Fe cation.

It belongs to the pirin family. In terms of assembly, may interact with NF1/CTF1. Interacts with BCL3. Identified in a complex comprised of PIR, BLC3, NFKB1 and target DNA. Requires Fe cation as cofactor.

Its subcellular location is the nucleus. It localises to the cytoplasm. The enzyme catalyses quercetin + O2 = 2-(3,4-dihydroxybenzoyloxy)-4,6-dihydroxybenzoate + CO. Its pathway is flavonoid metabolism; quercetin degradation. In terms of biological role, transcriptional coregulator of NF-kappa-B which facilitates binding of NF-kappa-B proteins to target kappa-B genes in a redox-state-dependent manner. May be required for efficient terminal myeloid maturation of hematopoietic cells. Has quercetin 2,3-dioxygenase activity (in vitro). The chain is Pirin (Pir) from Rattus norvegicus (Rat).